Reading from the N-terminus, the 673-residue chain is Citrate exporter 1 (673 aa).

The disordered stretch occupies residues 1–44; that stretch reads MFNLNTKSSKEPEVTEVAVDSTPSSPVTRESSPESSPDNSAVDL. Over residues 21 to 39 the composition is skewed to polar residues; it reads STPSSPVTRESSPESSPDN. A helical membrane pass occupies residues 67 to 87; that stretch reads FLVFGAMAFCMLVSFMDQNGI. A glycan (N-linked (GlcNAc...) asparagine) is linked at Asn99. A run of 4 helical transmembrane segments spans residues 103 to 123, 133 to 153, 164 to 184, and 194 to 214; these read TISWAGTSGLIANTVFQVLYG, LVFMIVVCTLVCADIGCACAQ, FSGIANGGMSCLTMIVVSDIV, and GILGACVGLGNTIGPFLGAAF. N-linked (GlcNAc...) asparagine glycosylation occurs at Asn217. The next 8 membrane-spanning stretches (helical) occupy residues 222-242, 261-281, 292-312, 322-342, 364-384, 393-413, 419-439, and 465-485; these read AIFYLLAPMGGLCAVVIFFIL, PGLFCSSVALVFLLVPIAGGG, ISMLCIGGVFFIAFFVIEGFF, IFGTKALFALMMHSVLLGIAY, AAGMSCALVTTQAVTTVISGQ, LEVIYFGFGIWTVGAIMKCFW, MALLIFSLLFEGAGVGCCFQP, and SFGGAVGLAVCSAILANSLKA. The N-linked (GlcNAc...) asparagine glycan is linked to Asn526. A helical transmembrane segment spans residues 529–549; sequence HTVFVFLCPIVGACLLVTVFV. Over residues 564–596 the composition is skewed to basic and acidic residues; that stretch reads AKTVEDKDKDESGTDCEDMTKGEVLVSEKEGKL. Disordered regions lie at residues 564–608 and 636–673; these read AKTV…MHFG and FPPMDHNDVITPLEDFDESPLPPHSPNSSGKRVTIQEE. N-linked (GlcNAc...) asparagine glycans are attached at residues Asn599 and Asn662.

It belongs to the major facilitator superfamily.

The protein resides in the cell membrane. It carries out the reaction citrate(in) = citrate(out). Functionally, transmembrane transporter that exports citrate across the cell membrane. The protein is Citrate exporter 1 of Yarrowia lipolytica (strain CLIB 122 / E 150) (Yeast).